Consider the following 124-residue polypeptide: Small ribosomal subunit protein uS12 (124 aa).

A compositionally biased stretch (basic residues) spans 11–20 (GRKRLKKKSK). Residues 11-30 (GRKRLKKKSKSPALENNPQK) are disordered. A 3-methylthioaspartic acid modification is found at Asp89. Residues 105–124 (EGVANRRQSRSRYGAKKPKK) form a disordered region. The span at 111-124 (RQSRSRYGAKKPKK) shows a compositional bias: basic residues.

It belongs to the universal ribosomal protein uS12 family. As to quaternary structure, part of the 30S ribosomal subunit. Contacts proteins S8 and S17. May interact with IF1 in the 30S initiation complex.

Its function is as follows. With S4 and S5 plays an important role in translational accuracy. Interacts with and stabilizes bases of the 16S rRNA that are involved in tRNA selection in the A site and with the mRNA backbone. Located at the interface of the 30S and 50S subunits, it traverses the body of the 30S subunit contacting proteins on the other side and probably holding the rRNA structure together. The combined cluster of proteins S8, S12 and S17 appears to hold together the shoulder and platform of the 30S subunit. This chain is Small ribosomal subunit protein uS12, found in Kosmotoga olearia (strain ATCC BAA-1733 / DSM 21960 / TBF 19.5.1).